The primary structure comprises 202 residues: dITP/XTP pyrophosphatase (202 aa).

Position 10 to 15 (10 to 15 (TGNAGK)) interacts with substrate. Mg(2+) contacts are provided by D46 and D75. D75 (proton acceptor) is an active-site residue. Residues S76, 160–163 (FGYD), K183, and 188–189 (HR) each bind substrate.

This sequence belongs to the HAM1 NTPase family. As to quaternary structure, homodimer. Mg(2+) serves as cofactor.

It carries out the reaction XTP + H2O = XMP + diphosphate + H(+). It catalyses the reaction dITP + H2O = dIMP + diphosphate + H(+). The catalysed reaction is ITP + H2O = IMP + diphosphate + H(+). Functionally, pyrophosphatase that catalyzes the hydrolysis of nucleoside triphosphates to their monophosphate derivatives, with a high preference for the non-canonical purine nucleotides XTP (xanthosine triphosphate), dITP (deoxyinosine triphosphate) and ITP. Seems to function as a house-cleaning enzyme that removes non-canonical purine nucleotides from the nucleotide pool, thus preventing their incorporation into DNA/RNA and avoiding chromosomal lesions. The protein is dITP/XTP pyrophosphatase of Idiomarina loihiensis (strain ATCC BAA-735 / DSM 15497 / L2-TR).